The chain runs to 560 residues: Platelet glycoprotein V (560 aa).

The N-terminal stretch at 1–16 (MLRGTLLCAVLGLLRA) is a signal peptide. In terms of domain architecture, LRRNT spans 17 to 50 (QPFPCPPACKCVFRDAAQCSGGDVARISALGLPT). Residues 17–523 (QPFPCPPACK…KGQDHSPFWG (507 aa)) lie on the Extracellular side of the membrane. A glycan (N-linked (GlcNAc...) asparagine) is linked at Asn-51. LRR repeat units follow at residues 75–96 (VLQR…TFSD), 99–120 (KLKT…LLDK), 123–144 (LLEQ…MFQK), 147–168 (NLQE…LFTN), 171–193 (NLKL…LGAQ), 195–216 (KLER…LLNS), 219–240 (ALTE…AFDR), 243–264 (NLSS…LFLH), 267–288 (NLTL…LFGE), 291–312 (GLQE…AFRN), 340–361 (ELQV…LLRG), 364–385 (KLRQ…LFRN), and 388–409 (SLES…VFGA). A glycan (N-linked (GlcNAc...) (complex) asparagine) is linked at Asn-181. Asn-243 carries an N-linked (GlcNAc...) (complex) asparagine glycan. N-linked (GlcNAc...) asparagine glycosylation is found at Asn-267, Asn-298, and Asn-312. Residue Asn-385 is glycosylated (N-linked (GlcNAc...) asparagine). Residues 421–474 (NSWRCDCGLGPFLGWLRQHLGLVGGEEPPRCAGPGAHAGLPLWALPGGDAECPG) form the LRRCT domain. A disordered region spans residues 469 to 498 (DAECPGPRGPPPRPAADSSSEAPVHPALAP). The N-linked (GlcNAc...) asparagine glycan is linked to Asn-499. A helical membrane pass occupies residues 524–544 (FYFLLLAVQAMITVIIVFAMI). Residues 545-560 (KIGQLFRKLIRERALG) lie on the Cytoplasmic side of the membrane.

In terms of processing, the N-terminus is blocked. In terms of tissue distribution, platelets and megakaryocytes.

The protein localises to the membrane. Functionally, the GPIb-V-IX complex functions as the vWF receptor and mediates vWF-dependent platelet adhesion to blood vessels. The adhesion of platelets to injured vascular surfaces in the arterial circulation is a critical initiating event in hemostasis. This chain is Platelet glycoprotein V (GP5), found in Homo sapiens (Human).